The chain runs to 101 residues: Small ribosomal subunit protein uS10 (101 aa).

Belongs to the universal ribosomal protein uS10 family. Part of the 30S ribosomal subunit.

Its function is as follows. Involved in the binding of tRNA to the ribosomes. The protein is Small ribosomal subunit protein uS10 of Brachyspira hyodysenteriae (Treponema hyodysenteriae).